The chain runs to 205 residues: MSSLQMSEMSKTYQYRKVMKPMLERKRRARINKCLDELKDLMVATLESEGEHVTRLEKADILELTVTHLQKMKQQRQHKRASGDESLTPAEGFRSGYIHAVNEVSRSLSQLPGMNVSLGTQLMTHLGQRLNQIQPAEKEVLPVTAPLSVHIANRDAYSVPISPISSYAGSPNSNTSSTSHSLLTTIDVTKMEDDSEDEENVWRPW.

The bHLH domain maps to 15–72 (YRKVMKPMLERKRRARINKCLDELKDLMVATLESEGEHVTRLEKADILELTVTHLQKM). The region spanning 93–126 (FRSGYIHAVNEVSRSLSQLPGMNVSLGTQLMTHL) is the Orange domain. Residues 202 to 205 (WRPW) carry the WRPW motif motif.

In terms of assembly, homodimer. Heterodimer with dpn. Might form higher-order oligomers. Transcription repression requires formation of a complex with a corepressor protein (Groucho). Expressed in sensory organ precursors in the wing, leg and eye imaginal disk.

Its subcellular location is the nucleus. Its function is as follows. Transcriptional repressor of genes that require a bHLH protein for their transcription. May serve as a transcriptional regulator of the Achaete-scute complex (AS-C) genes. Contributes to the neural-epidermal lineage decision during early neurogenesis. Part of the Notch signaling pathway, plays a role in neuroblasts proliferation in embryos and larvae. In the larval brain, together with other self-renewal transcriptional repressors such as klu and dpn, required for type II neuroblast self-renewal and for maintaining erm in an inactive state in intermediate neural progenitors (INP) derived from type II neuroblasts. This is Enhancer of split mgamma protein from Drosophila melanogaster (Fruit fly).